Consider the following 207-residue polypeptide: MAKGLIGEKLGMAHIFNNDGKMVTVTVLRVGPCFVSQVKTEANDGYEAVQLAFGDAKEKHLTKAELGHIKKANIATPKKTLVEFKGFEGVAVGSEVKLADIFALDDTVKVTGTSKGKGTQGVVKRHGFAGGPAGHGSRFQRHPGSIGSNTTPGRVFKGLKMGGRMGSEQTTVRNLKVVKIDADANLVFVSGPVPGRERGIVTIEKIG.

The segment at 129–152 (AGGPAGHGSRFQRHPGSIGSNTTP) is disordered.

The protein belongs to the universal ribosomal protein uL3 family. Part of the 50S ribosomal subunit. Forms a cluster with proteins L14 and L19.

In terms of biological role, one of the primary rRNA binding proteins, it binds directly near the 3'-end of the 23S rRNA, where it nucleates assembly of the 50S subunit. The chain is Large ribosomal subunit protein uL3 from Leptospira biflexa serovar Patoc (strain Patoc 1 / ATCC 23582 / Paris).